The following is a 286-amino-acid chain: Uridylate cyclase (286 aa).

Residues 90–223 (TAIFVDIRKS…DAVTKAANMS (134 aa)) form the Guanylate cyclase domain. An a ribonucleoside 5'-triphosphate-binding site is contributed by Phe93. Mn(2+) contacts are provided by Asp95, Ile96, and Asp140.

This sequence belongs to the adenylyl cyclase class-4/guanylyl cyclase family. Pyrimidine cyclase subfamily. In terms of assembly, homodimer. It depends on Mn(2+) as a cofactor.

The protein resides in the cytoplasm. The catalysed reaction is UTP = 3',5'-cyclic UMP + diphosphate. In terms of biological role, pycsar (pyrimidine cyclase system for antiphage resistance) provides immunity against bacteriophage. The pyrimidine cyclase (PycC) synthesizes cyclic nucleotides in response to infection; these serve as specific second messenger signals. The signals activate the adjacent effector, leading to bacterial cell death and abortive phage infection. A clade C Pycsar system. Functionally, the pyrimidine cyclase gene of a two-gene Pycsar system, weakly generates cyclic UMP (cUMP) from UTP, has little to no activity on ATP, CTP or GTP. Expression of this and adjacent effector TpPycTM (AC A0A1T4LJG1) probably confers resistance to bacteriophage. The genes are probably only expressed in response to bacteriophage infection. The chain is Uridylate cyclase from Treponema porcinum.